Reading from the N-terminus, the 178-residue chain is Disulfide bond formation protein B (178 aa).

The Cytoplasmic segment spans residues methionine 1–glycine 14. The helical transmembrane segment at tryptophan 15–tyrosine 31 threads the bilayer. Over phenylalanine 32–valine 49 the chain is Periplasmic. Cysteine 41 and cysteine 44 are joined by a disulfide. The helical transmembrane segment at alanine 50–proline 65 threads the bilayer. The Cytoplasmic portion of the chain corresponds to serine 66–phenylalanine 72. A helical transmembrane segment spans residues leucine 73–leucine 90. Over lysine 91–glutamine 145 the chain is Periplasmic. Cysteines 105 and 131 form a disulfide. A helical membrane pass occupies residues tryptophan 146–serine 164. At glutamine 165–arginine 178 the chain is on the cytoplasmic side.

It belongs to the DsbB family.

The protein resides in the cell inner membrane. Required for disulfide bond formation in some periplasmic proteins. Acts by oxidizing the DsbA protein. The sequence is that of Disulfide bond formation protein B from Mannheimia succiniciproducens (strain KCTC 0769BP / MBEL55E).